The chain runs to 242 residues: 2-C-methyl-D-erythritol 4-phosphate cytidylyltransferase (242 aa).

Belongs to the IspD/TarI cytidylyltransferase family. IspD subfamily.

The enzyme catalyses 2-C-methyl-D-erythritol 4-phosphate + CTP + H(+) = 4-CDP-2-C-methyl-D-erythritol + diphosphate. Its pathway is isoprenoid biosynthesis; isopentenyl diphosphate biosynthesis via DXP pathway; isopentenyl diphosphate from 1-deoxy-D-xylulose 5-phosphate: step 2/6. Functionally, catalyzes the formation of 4-diphosphocytidyl-2-C-methyl-D-erythritol from CTP and 2-C-methyl-D-erythritol 4-phosphate (MEP). This is 2-C-methyl-D-erythritol 4-phosphate cytidylyltransferase from Halorhodospira halophila (strain DSM 244 / SL1) (Ectothiorhodospira halophila (strain DSM 244 / SL1)).